Here is a 92-residue protein sequence, read N- to C-terminus: Small ribosomal subunit protein uS19 (92 aa).

The protein belongs to the universal ribosomal protein uS19 family.

Functionally, protein S19 forms a complex with S13 that binds strongly to the 16S ribosomal RNA. In Clostridium botulinum (strain Eklund 17B / Type B), this protein is Small ribosomal subunit protein uS19.